A 201-amino-acid chain; its full sequence is Imidazoleglycerol-phosphate dehydratase (201 aa).

Belongs to the imidazoleglycerol-phosphate dehydratase family.

Its subcellular location is the cytoplasm. The catalysed reaction is D-erythro-1-(imidazol-4-yl)glycerol 3-phosphate = 3-(imidazol-4-yl)-2-oxopropyl phosphate + H2O. The protein operates within amino-acid biosynthesis; L-histidine biosynthesis; L-histidine from 5-phospho-alpha-D-ribose 1-diphosphate: step 6/9. This Prochlorococcus marinus (strain MIT 9515) protein is Imidazoleglycerol-phosphate dehydratase.